The chain runs to 400 residues: Large envelope protein (400 aa).

The residue at position 1 (Met1) is an N-acetylmethionine. Disordered stretches follow at residues 1-42 (MGGY…NNPD) and 84-118 (ILTT…SHPQ). Residue Gly2 is the site of N-myristoyl glycine; by host attachment. A pre-S1 region spans residues 2-119 (GGYSSKPRKG…PPLRDSHPQA (118 aa)). The tract at residues 2 to 174 (GGYSSKPRKG…FSRTGDPVPK (173 aa)) is pre-S. At 2–181 (GGYSSKPRKG…VPKMENTTSG (180 aa)) the chain is on the virion surface; in external conformation side. Residues 2–253 (GGYSSKPRKG…PGYRWMCLRR (252 aa)) lie on the Intravirion; in internal conformation side of the membrane. Tyr4 carries an N-linked (GlcNAc...) asparagine glycan. The tract at residues 120–174 (MQWNSTTFHQALLDPRVRGLYFPAGGSSSGTANPVPTTASPISSIFSRTGDPVPK) is pre-S2. The helical transmembrane segment at 182–202 (FLGPLLVLQAGFFLLTRILTI) threads the bilayer. Residues 203 to 253 (PQSLDSWWTSLNFLGGAPACPGQNSQSPTSNHSPTSCPPICPGYRWMCLRR) are Intravirion; in external conformation-facing. Residues 254 to 274 (FIIFLFILLLCLIFLLVLLDY) form a helical membrane-spanning segment. At 275–348 (QGMLPVCPLI…WASVRFSWLS (74 aa)) the chain is on the virion surface side. Asn320 carries N-linked (GlcNAc...) asparagine; by host glycosylation. A helical transmembrane segment spans residues 349–369 (LLAPFVQWFVGLSPTVWLSVI). The Intravirion portion of the chain corresponds to 370–375 (WMMWYW). A helical membrane pass occupies residues 376–398 (GPSLYNILSPFLPLLPIFFCLWV). At 399-400 (YI) the chain is on the virion surface side.

The protein belongs to the orthohepadnavirus major surface antigen family. As to quaternary structure, in its internal form (Li-HBsAg), interacts with the capsid protein and with the isoform S. Interacts with host chaperone CANX. Associates with host chaperone CANX through its pre-S2 N glycan; this association may be essential for isoform M proper secretion. In terms of assembly, interacts with isoform L. Interacts with the antigens of satellite virus HDV (HDVAgs); this interaction is required for encapsidation of HDV genomic RNA. In terms of processing, isoform M is N-terminally acetylated by host at a ratio of 90%, and N-glycosylated by host at the pre-S2 region. Myristoylated.

The protein localises to the virion membrane. Its function is as follows. The large envelope protein exists in two topological conformations, one which is termed 'external' or Le-HBsAg and the other 'internal' or Li-HBsAg. In its external conformation the protein attaches the virus to cell receptors and thereby initiating infection. This interaction determines the species specificity and liver tropism. This attachment induces virion internalization predominantly through caveolin-mediated endocytosis. The large envelope protein also assures fusion between virion membrane and endosomal membrane. In its internal conformation the protein plays a role in virion morphogenesis and mediates the contact with the nucleocapsid like a matrix protein. The middle envelope protein plays an important role in the budding of the virion. It is involved in the induction of budding in a nucleocapsid independent way. In this process the majority of envelope proteins bud to form subviral lipoprotein particles of 22 nm of diameter that do not contain a nucleocapsid. This chain is Large envelope protein, found in Homo sapiens (Human).